The sequence spans 622 residues: ATP-dependent RNA helicase has1 (622 aa).

The disordered stretch occupies residues 1-137; it reads MSGPVDTAKS…DALRLPTVEG (137 aa). Positions 11 to 21 are enriched in basic residues; sequence ITKKRKRKHGG. The segment covering 46–63 has biased composition (basic and acidic residues); it reads SPEKGEDTKKSEKNGKDK. The span at 93–112 shows a compositional bias: acidic residues; it reads GDSDNNGDDGDDNSEAENGD. The Q motif motif lies at 140–168; the sequence is QKFTELGLTEKTLKAINDMGFDTMTEIQR. The Helicase ATP-binding domain maps to 171 to 347; that stretch reads IPPLLAGRDV…RISLRPGPLY (177 aa). An ATP-binding site is contributed by 184–191; that stretch reads AKTGSGKT. The DEAD box motif lies at 294–297; sequence DEAD. In terms of domain architecture, Helicase C-terminal spans 361-531; that stretch reads GLEQGYVICE…NVQSQLEKLI (171 aa). Residues 588–622 form a disordered region; sequence GASLSRDKKQQQQGRRNYGSQPHSKGLKFKRKHDD. The span at 598 to 610 shows a compositional bias: polar residues; the sequence is QQQGRRNYGSQPH. The span at 612–622 shows a compositional bias: basic residues; sequence KGLKFKRKHDD.

This sequence belongs to the DEAD box helicase family. DDX18/HAS1 subfamily. As to quaternary structure, associates in the nucleolus with the 60S and pre-60S ribosomal subunits.

Its subcellular location is the nucleus. It is found in the nucleolus. The enzyme catalyses ATP + H2O = ADP + phosphate + H(+). ATP-dependent RNA helicase involved in 40S ribosomal subunit biogenesis. Required for the processing and cleavage of 35S pre-rRNA at sites A0, A1, and A2, leading to mature 18S rRNA. The protein is ATP-dependent RNA helicase has1 (has1) of Neosartorya fischeri (strain ATCC 1020 / DSM 3700 / CBS 544.65 / FGSC A1164 / JCM 1740 / NRRL 181 / WB 181) (Aspergillus fischerianus).